We begin with the raw amino-acid sequence, 185 residues long: Kunitz-type serine protease inhibitor DrTI (185 aa).

2 disulfides stabilise this stretch: cysteine 44–cysteine 89 and cysteine 139–cysteine 147.

It belongs to the protease inhibitor I3 (leguminous Kunitz-type inhibitor) family.

It is found in the secreted. Functionally, inhibits bovine trypsin and human plasma kallikrein. The chain is Kunitz-type serine protease inhibitor DrTI from Delonix regia (Royal poinciana).